The primary structure comprises 820 residues: 1,4-alpha-glucan-branching enzyme, chloroplastic/amyloplastic (820 aa).

A compositionally biased stretch (low complexity) spans Met1 to Ala20. Positions Met1–Ala28 are disordered. The N-terminal 64 residues, Met1–Lys64, are a transit peptide targeting the chloroplast. Trp153 and Lys188 together coordinate (1,4-alpha-D-glucosyl)n. The active-site Nucleophile is the Asp409. Glu464 acts as the Proton donor in catalysis.

It belongs to the glycosyl hydrolase 13 family. GlgB subfamily. Monomer.

It is found in the plastid. It localises to the chloroplast. The protein resides in the amyloplast. The catalysed reaction is Transfers a segment of a (1-&gt;4)-alpha-D-glucan chain to a primary hydroxy group in a similar glucan chain.. The protein operates within glycan biosynthesis; starch biosynthesis. Functionally, catalyzes the formation of the alpha-1,6-glucosidic linkages in starch by scission of a 1,4-alpha-linked oligosaccharide from growing alpha-1,4-glucan chains and the subsequent attachment of the oligosaccharide to the alpha-1,6 position. This Oryza sativa subsp. japonica (Rice) protein is 1,4-alpha-glucan-branching enzyme, chloroplastic/amyloplastic (SBE1).